The chain runs to 512 residues: Histidine ammonia-lyase (512 aa).

A cross-link (5-imidazolinone (Ala-Gly)) is located at residues 144–146 (ASG). Ser-145 is subject to 2,3-didehydroalanine (Ser).

The protein belongs to the PAL/histidase family. Contains an active site 4-methylidene-imidazol-5-one (MIO), which is formed autocatalytically by cyclization and dehydration of residues Ala-Ser-Gly.

The protein localises to the cytoplasm. It catalyses the reaction L-histidine = trans-urocanate + NH4(+). The protein operates within amino-acid degradation; L-histidine degradation into L-glutamate; N-formimidoyl-L-glutamate from L-histidine: step 1/3. The sequence is that of Histidine ammonia-lyase from Desulfotalea psychrophila (strain LSv54 / DSM 12343).